A 180-amino-acid polypeptide reads, in one-letter code: Large ribosomal subunit protein uL6 (180 aa).

It belongs to the universal ribosomal protein uL6 family. As to quaternary structure, part of the 50S ribosomal subunit.

Its function is as follows. This protein binds to the 23S rRNA, and is important in its secondary structure. It is located near the subunit interface in the base of the L7/L12 stalk, and near the tRNA binding site of the peptidyltransferase center. The polypeptide is Large ribosomal subunit protein uL6 (Clostridium kluyveri (strain NBRC 12016)).